We begin with the raw amino-acid sequence, 1240 residues long: ABC transporter B family member 15 (1240 aa).

The next 6 membrane-spanning stretches (helical) occupy residues 35–55 (MGLG…VLLI), 82–102 (VALL…GYCW), 158–180 (LPNF…ILLW), 184–206 (IVGL…ALIS), 264–284 (GITI…SWYG), and 296–316 (GTVF…GGGL). One can recognise an ABC transmembrane type-1 1 domain in the interval 35–324 (MGLGLIGAVG…GLSNLKYFFE (290 aa)). Residues 359 to 595 (VEFKNVKFVY…IDGQYSTLVH (237 aa)) form the ABC transporter 1 domain. 394 to 401 (GGSGSGKS) contacts ATP. 3 N-linked (GlcNAc...) asparagine glycosylation sites follow: Asn542, Asn605, and Asn622. The segment at 617-646 (SKDIRNSSRVSTLSRSSSANSVTGPSTIKN) is disordered. Residues 623 to 639 (SSRVSTLSRSSSANSVT) are compositionally biased toward low complexity. Residue Asn646 is glycosylated (N-linked (GlcNAc...) asparagine). Residues 672-960 (ALYGCISATL…AGSMTTDLAK (289 aa)) form the ABC transmembrane type-1 2 domain. A run of 2 helical transmembrane segments spans residues 681 to 701 (LFGA…SVYF) and 714 to 734 (IYAL…ISQH). An N-linked (GlcNAc...) asparagine glycan is attached at Asn769. Transmembrane regions (helical) follow at residues 794-813 (ALVV…GLVI), 817-839 (LALV…RVLL), 895-915 (SWFA…TWAL), and 923-943 (LIQD…ILVS). One can recognise an ABC transporter 2 domain in the interval 995–1233 (VEFLDVDFSY…GPTGIYFSLV (239 aa)). Asn1015 is a glycosylation site (N-linked (GlcNAc...) asparagine). 1030–1037 (GPSGSGKS) lines the ATP pocket.

It belongs to the ABC transporter superfamily. ABCB family. Multidrug resistance exporter (TC 3.A.1.201) subfamily.

The protein resides in the membrane. This Arabidopsis thaliana (Mouse-ear cress) protein is ABC transporter B family member 15 (ABCB15).